A 540-amino-acid chain; its full sequence is Phosphoenolpyruvate carboxykinase (ATP) (540 aa).

Substrate is bound at residue R65. K87 carries the N6-acetyllysine modification. Residues Y207 and K213 each contribute to the substrate site. ATP-binding positions include K213, H232, and 248–256 (GLSGTGKTT). The Mn(2+) site is built by K213 and H232. D269 is a Mn(2+) binding site. Residues E297, R333, 449-450 (RI), and T455 each bind ATP. R333 lines the substrate pocket. K523 carries the N6-acetyllysine modification.

The protein belongs to the phosphoenolpyruvate carboxykinase (ATP) family. In terms of assembly, monomer. It depends on Mn(2+) as a cofactor.

The protein localises to the cytoplasm. The catalysed reaction is oxaloacetate + ATP = phosphoenolpyruvate + ADP + CO2. The protein operates within carbohydrate biosynthesis; gluconeogenesis. Functionally, involved in the gluconeogenesis. Catalyzes the conversion of oxaloacetate (OAA) to phosphoenolpyruvate (PEP) through direct phosphoryl transfer between the nucleoside triphosphate and OAA. In Escherichia fergusonii (strain ATCC 35469 / DSM 13698 / CCUG 18766 / IAM 14443 / JCM 21226 / LMG 7866 / NBRC 102419 / NCTC 12128 / CDC 0568-73), this protein is Phosphoenolpyruvate carboxykinase (ATP).